The sequence spans 294 residues: 4-hydroxy-tetrahydrodipicolinate synthase (294 aa).

Thr45 lines the pyruvate pocket. Catalysis depends on Tyr133, which acts as the Proton donor/acceptor. Residue Lys161 is the Schiff-base intermediate with substrate of the active site. Residue Ile203 participates in pyruvate binding.

Belongs to the DapA family. In terms of assembly, homotetramer; dimer of dimers.

Its subcellular location is the cytoplasm. It carries out the reaction L-aspartate 4-semialdehyde + pyruvate = (2S,4S)-4-hydroxy-2,3,4,5-tetrahydrodipicolinate + H2O + H(+). Its pathway is amino-acid biosynthesis; L-lysine biosynthesis via DAP pathway; (S)-tetrahydrodipicolinate from L-aspartate: step 3/4. Catalyzes the condensation of (S)-aspartate-beta-semialdehyde [(S)-ASA] and pyruvate to 4-hydroxy-tetrahydrodipicolinate (HTPA). This is 4-hydroxy-tetrahydrodipicolinate synthase from Buchnera aphidicola subsp. Acyrthosiphon pisum (strain APS) (Acyrthosiphon pisum symbiotic bacterium).